The sequence spans 1381 residues: Hepatocyte growth factor receptor (1381 aa).

The first 24 residues, 1–24, serve as a signal peptide directing secretion; it reads MKAPAVLAPGILVLLFTLVQRSNG. The Extracellular portion of the chain corresponds to 25–932; the sequence is ECKEALAKSE…VIVQPDQNFT (908 aa). The Sema domain maps to 27 to 515; the sequence is KEALAKSEMN…TGKKITKIPL (489 aa). N-linked (GlcNAc...) asparagine glycosylation is present at asparagine 45. 4 cysteine pairs are disulfide-bonded: cysteine 95–cysteine 101, cysteine 98–cysteine 160, cysteine 133–cysteine 141, and cysteine 172–cysteine 175. An N-linked (GlcNAc...) asparagine glycan is attached at asparagine 106. The N-linked (GlcNAc...) asparagine glycan is linked to asparagine 149. Asparagine 202 is a glycosylation site (N-linked (GlcNAc...) asparagine). 2 disulfide bridges follow: cysteine 298/cysteine 363 and cysteine 385/cysteine 397. N-linked (GlcNAc...) asparagine glycosylation is found at asparagine 399 and asparagine 405. 4 disulfide bridges follow: cysteine 520/cysteine 538, cysteine 526/cysteine 561, cysteine 529/cysteine 545, and cysteine 541/cysteine 551. IPT/TIG domains follow at residues 563–655, 657–739, and 742–836; these read PAIY…FSYV, PIIT…FSYR, and PIVY…LIYV. An O-linked (Man) threonine glycan is attached at threonine 582. 2 N-linked (GlcNAc...) asparagine glycosylation sites follow: asparagine 607 and asparagine 635. O-linked (Man) threonine glycosylation is found at threonine 676 and threonine 761. N-linked (GlcNAc...) asparagine glycosylation is found at asparagine 785, asparagine 879, and asparagine 930. Residues 933-955 traverse the membrane as a helical segment; the sequence is GLIAGVVSISIALLLLLGLFLWL. At 956 to 1381 the chain is on the cytoplasmic side; the sequence is KKRKQIKDLG…EDNADDEVDT (426 aa). Position 966 is a phosphoserine (serine 966). Phosphothreonine is present on threonine 977. A phosphoserine mark is found at serine 990, serine 997, and serine 1000. Phosphotyrosine is present on tyrosine 1003. The Protein kinase domain occupies 1078–1345; the sequence is VHFNEVIGRG…RISAIFSTFI (268 aa). ATP-binding positions include 1084–1092 and lysine 1110; that span reads IGRGHFGCV. The active-site Proton acceptor is aspartate 1204. Positions 1212 to 1381 are interaction with RANBP9; the sequence is LDEKFTVKVA…EDNADDEVDT (170 aa). Tyrosine 1230 bears the Phosphotyrosine mark. Phosphotyrosine; by autocatalysis is present on residues tyrosine 1234 and tyrosine 1235. Threonine 1289 is modified (phosphothreonine). Residues 1320–1359 are interaction with MUC20; that stretch reads WHPKAEMRPSFSELVSRISAIFSTFIGEHYVHVNATYVNV. Phosphotyrosine; by autocatalysis is present on residues tyrosine 1349 and tyrosine 1356. Tyrosine 1365 carries the phosphotyrosine modification.

It belongs to the protein kinase superfamily. Tyr protein kinase family. In terms of assembly, heterodimer made of an alpha chain (50 kDa) and a beta chain (145 kDa) which are disulfide linked. Binds PLXNB1. Interacts when phosphorylated with downstream effectors including STAT3, PIK3R1, SRC, PCLG1, GRB2 and GAB1. Interacts with SPSB1, SPSB2 and SPSB4. Interacts with INPP5D/SHIP1. When phosphorylated at Tyr-1356, interacts with INPPL1/SHIP2. Interacts with RANBP9 and RANBP10, as well as SPSB1, SPSB2, SPSB3 and SPSB4. SPSB1 binding occurs in the presence and in the absence of HGF, however HGF treatment has a positive effect on this interaction. Interacts with MUC20; prevents interaction with GRB2 and suppresses hepatocyte growth factor-induced cell proliferation. Interacts with GRB10. Interacts with PTPN1 and PTPN2. Interacts with HSP90AA1 and HSP90AB1; the interaction suppresses MET kinase activity. Interacts with tensin TNS3. Interacts (when phosphorylated) with tensin TNS4 (via SH2 domain); the interaction increases MET protein stability by inhibiting MET endocytosis and subsequent lysosomal degradation. In terms of processing, autophosphorylated in response to ligand binding on Tyr-1234 and Tyr-1235 in the kinase domain leading to further phosphorylation of Tyr-1349 and Tyr-1356 in the C-terminal multifunctional docking site. Dephosphorylated by PTPRJ at Tyr-1349 and Tyr-1365. Dephosphorylated by PTPN1 and PTPN2. Ubiquitinated. Ubiquitination by CBL regulates the receptor stability and activity through proteasomal degradation. Post-translationally, O-mannosylation of IPT/TIG domains by TMEM260 is required for protein maturation. O-mannosylated residues are composed of single mannose glycans that are not elongated or modified.

It is found in the membrane. The catalysed reaction is L-tyrosyl-[protein] + ATP = O-phospho-L-tyrosyl-[protein] + ADP + H(+). Its activity is regulated as follows. In its inactive state, the C-terminal tail interacts with the catalytic domain and inhibits the kinase activity. Upon ligand binding, the C-terminal tail is displaced and becomes phosphorylated, thus increasing the kinase activity. In terms of biological role, receptor tyrosine kinase that transduces signals from the extracellular matrix into the cytoplasm by binding to hepatocyte growth factor/HGF ligand. Regulates many physiological processes including proliferation, scattering, morphogenesis and survival. Ligand binding at the cell surface induces autophosphorylation of MET on its intracellular domain that provides docking sites for downstream signaling molecules. Following activation by ligand, interacts with the PI3-kinase subunit PIK3R1, PLCG1, SRC, GRB2, STAT3 or the adapter GAB1. Recruitment of these downstream effectors by MET leads to the activation of several signaling cascades including the RAS-ERK, PI3 kinase-AKT, or PLCgamma-PKC. The RAS-ERK activation is associated with the morphogenetic effects while PI3K/AKT coordinates prosurvival effects. During embryonic development, MET signaling plays a role in gastrulation, development and migration of muscles and neuronal precursors, angiogenesis and kidney formation. In adults, participates in wound healing as well as organ regeneration and tissue remodeling. Also promotes differentiation and proliferation of hematopoietic cells. The chain is Hepatocyte growth factor receptor (MET) from Colobus guereza (Mantled guereza).